We begin with the raw amino-acid sequence, 435 residues long: Probable protein arginine N-methyltransferase 6 (435 aa).

The disordered stretch occupies residues 1 to 48 (MQSGGDFSNGFHGDHHRELELEDKQGPSLSSFGRAKKRSHAGARDPRG). Residues 12–25 (HGDHHRELELEDKQ) are compositionally biased toward basic and acidic residues. The 339-residue stretch at 80 to 418 (DVAYFHSYAH…KENKRFMNIH (339 aa)) folds into the SAM-dependent MTase PRMT-type domain. 5 residues coordinate S-adenosyl-L-methionine: His93, Arg102, Gly126, Asp148, and Glu177. Catalysis depends on residues Glu191 and Glu200. The disordered stretch occupies residues 333-377 (PAKNTSETSIASGSSSISPSGEVNQKKRTNPSDALVLSTSPESPP). A compositionally biased stretch (low complexity) spans 337–354 (TSETSIASGSSSISPSGE).

It belongs to the class I-like SAM-binding methyltransferase superfamily. Protein arginine N-methyltransferase family. PRMT6 subfamily.

Its function is as follows. Arginine methyltransferase that can both catalyze the formation of omega-N monomethylarginine (MMA) and asymmetrical dimethylarginine (aDMA). This Arabidopsis thaliana (Mouse-ear cress) protein is Probable protein arginine N-methyltransferase 6 (PRMT6).